The chain runs to 217 residues: Elongation factor Ts (217 aa).

The tract at residues 81-84 (TDFV) is involved in Mg(2+) ion dislocation from EF-Tu.

Belongs to the EF-Ts family.

It is found in the cytoplasm. Functionally, associates with the EF-Tu.GDP complex and induces the exchange of GDP to GTP. It remains bound to the aminoacyl-tRNA.EF-Tu.GTP complex up to the GTP hydrolysis stage on the ribosome. This is Elongation factor Ts from Myxococcus xanthus (strain DK1622).